Consider the following 420-residue polypeptide: Mitochondrial chaperone BCS1 (420 aa).

Over 1 to 15 the chain is Mitochondrial intermembrane; that stretch reads MTLSDFIGALKDNPY. Residues 16–32 form a helical membrane-spanning segment; it reads FGAGFGLVGVGTALAVA. At 33-420 the chain is on the mitochondrial matrix side; sequence RKGAQVGMIF…AIKNIAEIKD (388 aa). 230-237 contributes to the ATP binding site; sequence GPPGCGKS.

The protein belongs to the AAA ATPase family. BCS1 subfamily.

Its subcellular location is the mitochondrion inner membrane. It catalyses the reaction ATP + H2O = ADP + phosphate + H(+). Its function is as follows. Chaperone necessary for the incorporation of Rieske iron-sulfur protein uqcrfs1 into the mitochondrial respiratory chain complex III. The polypeptide is Mitochondrial chaperone BCS1 (bcs1l) (Danio rerio (Zebrafish)).